Consider the following 308-residue polypeptide: Glutaminase 2 (308 aa).

7 residues coordinate substrate: Ser66, Asn117, Glu161, Asn168, Tyr192, Tyr244, and Val262.

Belongs to the glutaminase family. In terms of assembly, homotetramer.

It catalyses the reaction L-glutamine + H2O = L-glutamate + NH4(+). The polypeptide is Glutaminase 2 (Escherichia coli O157:H7).